Here is a 153-residue protein sequence, read N- to C-terminus: RNA-binding protein OPG065 (153 aa).

Residues 1–33 (MEKREVNKALYDLQRSAMVYSSNDTPPRWSTTM) form the Z-binding domain. Residues 22-34 (SNDTPPRWSTTMD) show a composition bias toward polar residues. The segment at 22 to 44 (SNDTPPRWSTTMDADTRPTDSDA) is disordered. Residues 80–147 (NPVTVINEYC…AKLAVDKLLS (68 aa)) enclose the DRBM domain.

Belongs to the orthopoxvirus OPG065 family. In terms of assembly, interacts with host G1P2/ISG15. Interacts with host EIF2AK2/PKR. Interacts with host ZBP1.

Functionally, RNA-binding protein that plays a role in the inhibition of multiple cellular antiviral responses activated by double-stranded RNA (dsRNA), such as inhibition of PKR activation, necroptosis, and IFN-mediated antiviral activities. Recognizes and binds Z-RNA structures via its Z-binding domain and dsRNA via its DRBM domain: RNA-binding activity is required to escape host ZBP1-dependent necroptosis. Mechanistically, the Z-binding domain binds Z-RNAs that are produced during vaccinia virus infection, thereby competing with Z-RNA detection by host ZBP1, suppressing ZBP1-dependent necroptosis. Acts as a key inhibitor of the interferon response by blocking the phosphorylation and subsequent activation of IRF3 and IRF7 kinases that are required for interferon-alpha gene expression. Inhibits NF-kappa-B activation and the ubiquitin-like protein ISG15, which is an early antiviral protein. The binding with host ISG15 subsequently blocks host ISGylation. The chain is RNA-binding protein OPG065 (OPG065) from Monkeypox virus.